The sequence spans 119 residues: Flagellar transcriptional regulator FlhD (119 aa).

Belongs to the FlhD family. As to quaternary structure, homodimer; disulfide-linked. Forms a heterohexamer composed of two FlhC and four FlhD subunits. Each FlhC binds a FlhD dimer, forming a heterotrimer, and a hexamer assembles by dimerization of two heterotrimers.

Its subcellular location is the cytoplasm. Its function is as follows. Functions in complex with FlhC as a master transcriptional regulator that regulates transcription of several flagellar and non-flagellar operons by binding to their promoter region. Activates expression of class 2 flagellar genes, including fliA, which is a flagellum-specific sigma factor that turns on the class 3 genes. Also regulates genes whose products function in a variety of physiological pathways. This Enterobacter sp. (strain 638) protein is Flagellar transcriptional regulator FlhD.